A 130-amino-acid chain; its full sequence is Secreted RxLR effector protein 66 (130 aa).

The signal sequence occupies residues 1 to 21; the sequence is MHLRLLMSTVITATLIVSNNA. The RxLR-dEER motif lies at 32 to 62; it reads RALRGASTVGIAADNLLAAHFSPTLKHKESR. Residues 104–124 form a helical membrane-spanning segment; that stretch reads GPAIAIFAGVAATFILIDYLI.

Belongs to the RxLR effector family.

It localises to the secreted. It is found in the host cytoplasm. Its subcellular location is the host nucleus. The protein resides in the membrane. Effector that acts as a broad suppressor of cell death to interrupt plant immunity. Inhibits cell death induced by cell death-inducing proteins, including the PAMP elicitor INF1 from P.infestans. The protein is Secreted RxLR effector protein 66 of Plasmopara viticola (Downy mildew of grapevine).